Consider the following 457-residue polypeptide: Cysteine--tRNA ligase (457 aa).

Cys-28 contributes to the Zn(2+) binding site. Positions 30 to 40 match the 'HIGH' region motif; sequence PTVYDTAHIGN. Residues Cys-212, His-237, and Glu-241 each coordinate Zn(2+). The 'KMSKS' region signature appears at 270-274; that stretch reads KMSKS. ATP is bound at residue Lys-273.

This sequence belongs to the class-I aminoacyl-tRNA synthetase family. In terms of assembly, monomer. It depends on Zn(2+) as a cofactor.

Its subcellular location is the cytoplasm. The enzyme catalyses tRNA(Cys) + L-cysteine + ATP = L-cysteinyl-tRNA(Cys) + AMP + diphosphate. This Wolbachia pipientis wMel protein is Cysteine--tRNA ligase.